A 1153-amino-acid chain; its full sequence is Tyrosine-protein kinase JAK1 (1153 aa).

The FERM domain maps to 32–416 (KGLEIHFYLA…GYFRLTVDAH (385 aa)). One can recognise an SH2; atypical domain in the interval 435–540 (GCHGPICTEY…NLRFQLRRCC (106 aa)). 2 consecutive Protein kinase domains span residues 580-846 (IVQG…DIVM) and 872-1150 (LKKI…QQML). Residues 878 to 886 (LGEGHFGKV) and Lys905 contribute to the ATP site. Catalysis depends on Asp1000, which acts as the Proton acceptor. 2 positions are modified to phosphotyrosine; by autocatalysis: Tyr1031 and Tyr1032.

Belongs to the protein kinase superfamily. Tyr protein kinase family. JAK subfamily. It depends on Mg(2+) as a cofactor.

It is found in the endomembrane system. It catalyses the reaction L-tyrosyl-[protein] + ATP = O-phospho-L-tyrosyl-[protein] + ADP + H(+). In terms of biological role, tyrosine kinase of the non-receptor type, involved in the IFN-alpha/beta/gamma signal pathway. Appears to be required in early development for specific cell migrations (epiboly), expression of homeobox protein goosecoid and formation of anterior structures. The sequence is that of Tyrosine-protein kinase JAK1 (jak1) from Danio rerio (Zebrafish).